Here is a 183-residue protein sequence, read N- to C-terminus: Small ribosomal subunit protein uS4c (183 aa).

One can recognise an S4 RNA-binding domain in the interval Met82–Asn143.

The protein belongs to the universal ribosomal protein uS4 family. As to quaternary structure, part of the 30S ribosomal subunit. Contacts protein S5. The interaction surface between S4 and S5 is involved in control of translational fidelity.

It is found in the plastid. The protein resides in the chloroplast. One of the primary rRNA binding proteins, it binds directly to 16S rRNA where it nucleates assembly of the body of the 30S subunit. In terms of biological role, with S5 and S12 plays an important role in translational accuracy. The protein is Small ribosomal subunit protein uS4c (rps4) of Babiana stricta (Baboon flower).